The following is a 342-amino-acid chain: tRNA N6-adenosine threonylcarbamoyltransferase (342 aa).

Fe cation is bound by residues His115 and His119. Residues 138–142, Asp171, Gly184, Asp188, and Asn276 contribute to the substrate site; that span reads IISGG. Asp304 lines the Fe cation pocket.

Belongs to the KAE1 / TsaD family. The cofactor is Fe(2+).

The protein resides in the cytoplasm. It catalyses the reaction L-threonylcarbamoyladenylate + adenosine(37) in tRNA = N(6)-L-threonylcarbamoyladenosine(37) in tRNA + AMP + H(+). Its function is as follows. Required for the formation of a threonylcarbamoyl group on adenosine at position 37 (t(6)A37) in tRNAs that read codons beginning with adenine. Is involved in the transfer of the threonylcarbamoyl moiety of threonylcarbamoyl-AMP (TC-AMP) to the N6 group of A37, together with TsaE and TsaB. TsaD likely plays a direct catalytic role in this reaction. In Endomicrobium trichonymphae, this protein is tRNA N6-adenosine threonylcarbamoyltransferase.